A 133-amino-acid chain; its full sequence is Small ribosomal subunit protein uS8 (133 aa).

It belongs to the universal ribosomal protein uS8 family. Part of the 30S ribosomal subunit. Contacts proteins S5 and S12.

Functionally, one of the primary rRNA binding proteins, it binds directly to 16S rRNA central domain where it helps coordinate assembly of the platform of the 30S subunit. The protein is Small ribosomal subunit protein uS8 of Cyanothece sp. (strain PCC 7425 / ATCC 29141).